The sequence spans 253 residues: Ribosomal RNA small subunit methyltransferase A (253 aa).

His12, Leu14, Gly39, Glu60, Asp81, and Asn104 together coordinate S-adenosyl-L-methionine.

This sequence belongs to the class I-like SAM-binding methyltransferase superfamily. rRNA adenine N(6)-methyltransferase family. RsmA subfamily.

It localises to the cytoplasm. The enzyme catalyses adenosine(1518)/adenosine(1519) in 16S rRNA + 4 S-adenosyl-L-methionine = N(6)-dimethyladenosine(1518)/N(6)-dimethyladenosine(1519) in 16S rRNA + 4 S-adenosyl-L-homocysteine + 4 H(+). Specifically dimethylates two adjacent adenosines (A1518 and A1519) in the loop of a conserved hairpin near the 3'-end of 16S rRNA in the 30S particle. May play a critical role in biogenesis of 30S subunits. The chain is Ribosomal RNA small subunit methyltransferase A from Acidovorax ebreus (strain TPSY) (Diaphorobacter sp. (strain TPSY)).